Here is a 114-residue protein sequence, read N- to C-terminus: Small ribosomal subunit protein bS16 (114 aa).

The protein belongs to the bacterial ribosomal protein bS16 family.

The polypeptide is Small ribosomal subunit protein bS16 (Prochlorococcus marinus subsp. pastoris (strain CCMP1986 / NIES-2087 / MED4)).